A 37-amino-acid polypeptide reads, in one-letter code: Large ribosomal subunit protein bL36A (37 aa).

The protein belongs to the bacterial ribosomal protein bL36 family.

In Methylobacillus flagellatus (strain ATCC 51484 / DSM 6875 / VKM B-1610 / KT), this protein is Large ribosomal subunit protein bL36A.